The following is a 604-amino-acid chain: uncharacterized protein (604 aa).

The disordered stretch occupies residues 239–259; it reads ELNSPQELNDPQELNNSQDLN.

This is an uncharacterized protein from Escherichia coli (strain K12).